The primary structure comprises 28 residues: Probable small spore coat assembly protein B (28 aa).

Residues 4-24 (VFAGGFALLVVLFILLIIIGA) traverse the membrane as a helical segment.

This sequence belongs to the SscA family.

The protein localises to the membrane. This is Probable small spore coat assembly protein B from Bacillus subtilis (strain 168).